The following is a 139-amino-acid chain: MLHCTQVCLSALTKRTHRVKVQVLKDFPRFQLYKGQVANVKPSLMRNYLHNFNGAKYILSEEHDINTELLKQYQTLEAKLEEDHQQLSKRHETEVQKNMELRKESVFGHKKEEKPKEEKKGLLDSGITIEEVKIPGLDI.

The tract at residues 83-121 is disordered; the sequence is DHQQLSKRHETEVQKNMELRKESVFGHKKEEKPKEEKKG.

Belongs to the bacterial ribosomal protein bL9 family. As to quaternary structure, component of the mitochondrial large ribosomal subunit (mt-LSU). Mature yeast 74S mitochondrial ribosomes consist of a small (37S) and a large (54S) subunit. The 37S small subunit contains a 15S ribosomal RNA (15S mt-rRNA) and 34 different proteins. The 54S large subunit contains a 21S rRNA (21S mt-rRNA) and 46 different proteins.

It localises to the mitochondrion. Functionally, component of the mitochondrial ribosome (mitoribosome), a dedicated translation machinery responsible for the synthesis of mitochondrial genome-encoded proteins, including at least some of the essential transmembrane subunits of the mitochondrial respiratory chain. The mitoribosomes are attached to the mitochondrial inner membrane and translation products are cotranslationally integrated into the membrane. This is Large ribosomal subunit protein bL9m (MRPL50) from Saccharomyces cerevisiae (strain ATCC 204508 / S288c) (Baker's yeast).